The primary structure comprises 320 residues: ATP-dependent 6-phosphofructokinase (320 aa).

Position 12 (G12) interacts with ATP. ADP is bound by residues 22 to 26 (RGVVR) and 55 to 60 (RYSVSD). ATP contacts are provided by residues 73-74 (RF) and 103-106 (GDGS). D104 is a Mg(2+) binding site. Residue 126 to 128 (TID) coordinates substrate. D128 (proton acceptor) is an active-site residue. R155 serves as a coordination point for ADP. Substrate-binding positions include R163 and 170 to 172 (MGR). ADP-binding positions include 186-188 (GCE), K212, and 214-216 (KKH). Substrate-binding positions include E223, R244, and 250-253 (HIQR).

Belongs to the phosphofructokinase type A (PFKA) family. ATP-dependent PFK group I subfamily. Prokaryotic clade 'B1' sub-subfamily. Homotetramer. Mg(2+) is required as a cofactor.

The protein resides in the cytoplasm. It catalyses the reaction beta-D-fructose 6-phosphate + ATP = beta-D-fructose 1,6-bisphosphate + ADP + H(+). Its pathway is carbohydrate degradation; glycolysis; D-glyceraldehyde 3-phosphate and glycerone phosphate from D-glucose: step 3/4. Its activity is regulated as follows. Allosterically activated by ADP and other diphosphonucleosides, and allosterically inhibited by phosphoenolpyruvate. In terms of biological role, catalyzes the phosphorylation of D-fructose 6-phosphate to fructose 1,6-bisphosphate by ATP, the first committing step of glycolysis. This chain is ATP-dependent 6-phosphofructokinase, found in Sodalis glossinidius (strain morsitans).